We begin with the raw amino-acid sequence, 412 residues long: Heme chaperone HemW (412 aa).

The 238-residue stretch at 4–241 folds into the Radical SAM core domain; sequence GTYLMPTAAY…RHGQEVLTQA (238 aa). Tyr13 is a binding site for S-adenosyl-L-methionine. Residues Cys19, Cys23, and Cys26 each coordinate [2Fe-2S] cluster. S-adenosyl-L-methionine is bound by residues Gly72, 73 to 74, Glu105, Gln132, Arg144, and Asp169; that span reads GT.

Belongs to the anaerobic coproporphyrinogen-III oxidase family. HemW subfamily. It depends on [4Fe-4S] cluster as a cofactor.

The protein localises to the cytoplasm. Probably acts as a heme chaperone, transferring heme to an unknown acceptor. Binds one molecule of heme per monomer, possibly covalently. Binds 1 [2Fe-2S] cluster. Although this protein has sequence motifs typically found in proteins binding the [4Fe-4S]-AdoMet radical-SAM cluster and S-adenosylmethionine, spectroscopic evidence suggests that a [2Fe-2S] cluster is present; S-adenosylmethionine was not detected. Has no detectable coproporphyrinogen-III oxidase activity. The sequence is that of Heme chaperone HemW from Synechocystis sp. (strain ATCC 27184 / PCC 6803 / Kazusa).